A 571-amino-acid chain; its full sequence is Sulfite reductase [NADPH] hemoprotein beta-component (571 aa).

Residues Cys435, Cys441, Cys480, and Cys484 each coordinate [4Fe-4S] cluster. Siroheme is bound at residue Cys484.

It belongs to the nitrite and sulfite reductase 4Fe-4S domain family. Alpha(8)-beta(8). The alpha component is a flavoprotein, the beta component is a hemoprotein. Siroheme serves as cofactor. [4Fe-4S] cluster is required as a cofactor.

The enzyme catalyses hydrogen sulfide + 3 NADP(+) + 3 H2O = sulfite + 3 NADPH + 4 H(+). It participates in sulfur metabolism; hydrogen sulfide biosynthesis; hydrogen sulfide from sulfite (NADPH route): step 1/1. Its function is as follows. Component of the sulfite reductase complex that catalyzes the 6-electron reduction of sulfite to sulfide. This is one of several activities required for the biosynthesis of L-cysteine from sulfate. The sequence is that of Sulfite reductase [NADPH] hemoprotein beta-component from Erwinia tasmaniensis (strain DSM 17950 / CFBP 7177 / CIP 109463 / NCPPB 4357 / Et1/99).